Here is a 1178-residue protein sequence, read N- to C-terminus: DNA-directed RNA polymerase subunit beta (1178 aa).

Belongs to the RNA polymerase beta chain family. In terms of assembly, the RNAP catalytic core consists of 2 alpha, 1 beta, 1 beta' and 1 omega subunit. When a sigma factor is associated with the core the holoenzyme is formed, which can initiate transcription.

It carries out the reaction RNA(n) + a ribonucleoside 5'-triphosphate = RNA(n+1) + diphosphate. In terms of biological role, DNA-dependent RNA polymerase catalyzes the transcription of DNA into RNA using the four ribonucleoside triphosphates as substrates. The sequence is that of DNA-directed RNA polymerase subunit beta from Treponema pallidum (strain Nichols).